The chain runs to 827 residues: Mitogen-activated protein kinase kinase kinase kinase 1 (827 aa).

Residues 17–274 (YDLLQRLGGG…ATKMLSHQLV (258 aa)) enclose the Protein kinase domain. ATP is bound by residues 23-31 (LGGGTYGEV) and lysine 46. Aspartate 137 (proton acceptor) is an active-site residue. Position 165 is a phosphothreonine; by autocatalysis (threonine 165). The residue at position 171 (serine 171) is a Phosphoserine; by autocatalysis. Threonine 175 is subject to Phosphothreonine; by autocatalysis. Residues 296–315 (KGLPVDIEDEEPEPPPAIPR) form a disordered region. Threonine 354 bears the Phosphothreonine; by autocatalysis mark. The segment at 359 to 485 (PPAHFGSTSP…KMRGKMENEK (127 aa)) is disordered. Residues serine 373, serine 375, serine 403, serine 405, and serine 419 each carry the phosphoserine modification. The segment covering 374–383 (DSDDDYDDVD) has biased composition (acidic residues). Pro residues-rich tracts occupy residues 429-443 (GPPPRTPRPGPPPAT) and 461-471 (APEPGQPPLVP). Residues 472–485 (PRKEKMRGKMENEK) show a composition bias toward basic and acidic residues. A CNH domain is found at 501-806 (PLQIHSTAAW…TFRLLCSPRP (306 aa)). Serine 592 is subject to Phosphoserine.

This sequence belongs to the protein kinase superfamily. STE Ser/Thr protein kinase family. STE20 subfamily. In terms of assembly, interacts with MAP3K1. Interacts with FBXW8. Interacts with CLNK (via its SH2 domain). Requires Mg(2+) as cofactor. Autophosphorylates: phosphorylation promotes ubiquitination by the Cul7-RING(FBXW8) ubiquitin-protein ligase complex, leading to its degradation by the proteasome. In terms of processing, tyrosine-phosphorylated after activation of hemopoietic cells. Post-translationally, ubiquitinated by the Cul7-RING(FBXW8) ubiquitin-protein ligase complex following autophosphorylation, leading to its degradation by the proteasome. Expressed in hemopoietic cells (at protein level). Ubiquitously expressed in all tissues examined at embryonic stage 16.5 dpc with high levels in lung, heart and fetal liver. In the neonate, expression is restricted to the tissues which undergo lineage decisions, lung, thymus, liver, kidney and brain. In the adult, expression is limited to hemopoietic organs, thymus, bone marrow, and spleen and to the testis.

The enzyme catalyses L-seryl-[protein] + ATP = O-phospho-L-seryl-[protein] + ADP + H(+). The catalysed reaction is L-threonyl-[protein] + ATP = O-phospho-L-threonyl-[protein] + ADP + H(+). Serine/threonine-protein kinase, which plays a role in the response to environmental stress. Appears to act upstream of the JUN N-terminal pathway. Activator of the Hippo signaling pathway which plays a pivotal role in organ size control and tumor suppression by restricting proliferation and promoting apoptosis. MAP4Ks act in parallel to and are partially redundant with STK3/MST2 and STK4/MST2 in the phosphorylation and activation of LATS1/2, and establish MAP4Ks as components of the expanded Hippo pathway. May play a role in hematopoietic lineage decisions and growth regulation. Together with CLNK, it enhances CD3-triggered activation of T-cells and subsequent IL2 production. This chain is Mitogen-activated protein kinase kinase kinase kinase 1 (Map4k1), found in Mus musculus (Mouse).